The primary structure comprises 274 residues: 16S rRNA (guanine(1405)-N(7))-methyltransferase (274 aa).

S-adenosyl-L-methionine contacts are provided by residues Phe-64, 102 to 104, Arg-108, Ala-133, Asp-156, 182 to 183, Leu-198, and Gln-207; these read HVS and DL.

The protein belongs to the methyltransferase superfamily. Aminoglycoside resistance family.

It carries out the reaction guanosine(1405) in 16S rRNA + S-adenosyl-L-methionine = N(7)-methylguanosine(1405) in 16S rRNA + S-adenosyl-L-homocysteine. In terms of biological role, specifically methylates the N(7) position of guanine 1405 in 16S rRNA. Confers resistance to various aminoglycosides, including gentamicin and kanamycin. In Micromonospora echinospora (Micromonospora purpurea), this protein is 16S rRNA (guanine(1405)-N(7))-methyltransferase (grm).